Reading from the N-terminus, the 218-residue chain is Uracil-DNA glycosylase (218 aa).

The Proton acceptor role is filled by Asp68.

It belongs to the uracil-DNA glycosylase (UDG) superfamily. UNG family. In terms of assembly, homodimer. Interacts with protein OPG148. Component of the Uracil-DNA glycosylase(UDG)-OPG148-polymerase complex; OPG148 and UDG form a heterodimeric processivity factor that associates with OPG71 to form the processive polymerase holoenzyme.

The catalysed reaction is Hydrolyzes single-stranded DNA or mismatched double-stranded DNA and polynucleotides, releasing free uracil.. In terms of biological role, plays an essential role in viral replication as a component of the DNA polymerase processivity factor. Excises uracil residues from the DNA which can arise as a result of misincorporation of dUMP residues by DNA polymerase or due to deamination of cytosine. The chain is Uracil-DNA glycosylase (OPG116) from Bos taurus (Bovine).